Consider the following 95-residue polypeptide: Co-chaperonin GroES (95 aa).

The protein belongs to the GroES chaperonin family. In terms of assembly, heptamer of 7 subunits arranged in a ring. Interacts with the chaperonin GroEL.

The protein resides in the cytoplasm. In terms of biological role, together with the chaperonin GroEL, plays an essential role in assisting protein folding. The GroEL-GroES system forms a nano-cage that allows encapsulation of the non-native substrate proteins and provides a physical environment optimized to promote and accelerate protein folding. GroES binds to the apical surface of the GroEL ring, thereby capping the opening of the GroEL channel. The chain is Co-chaperonin GroES from Rickettsia akari (strain Hartford).